A 110-amino-acid polypeptide reads, in one-letter code: Phosphoribosyl-ATP pyrophosphatase (110 aa).

It belongs to the PRA-PH family.

It is found in the cytoplasm. The enzyme catalyses 1-(5-phospho-beta-D-ribosyl)-ATP + H2O = 1-(5-phospho-beta-D-ribosyl)-5'-AMP + diphosphate + H(+). Its pathway is amino-acid biosynthesis; L-histidine biosynthesis; L-histidine from 5-phospho-alpha-D-ribose 1-diphosphate: step 2/9. In Pseudomonas fluorescens (strain SBW25), this protein is Phosphoribosyl-ATP pyrophosphatase.